We begin with the raw amino-acid sequence, 810 residues long: Protein kinase C-binding protein NELL1 (810 aa).

An N-terminal signal peptide occupies residues 1–21; that stretch reads MPMDLILVVWFCVCTARTVVG. Residues Asn40, Asn53, Asn83, Asn224, Asn294, and Asn372 are each glycosylated (N-linked (GlcNAc...) asparagine). One can recognise a Laminin G-like domain in the interval 64–227; the sequence is EREIHAAPHV…TQCPNLNHTC (164 aa). The VWFC 1 domain maps to 271 to 332; sequence KTCQVSGLLY…IAGQCCKVCR (62 aa). 3 cysteine pairs are disulfide-bonded: Cys395/Cys407, Cys401/Cys416, and Cys418/Cys432. 3 residues coordinate Ca(2+): Asp434, Ile435, and Glu437. In terms of domain architecture, EGF-like 1; calcium-binding spans 434–475; it reads DIDECAAKMHYCHANTVCVNLPGLYRCDCVPGYIRVDDFSCT. Cystine bridges form between Cys438–Cys451, Cys445–Cys460, Cys462–Cys474, Cys480–Cys493, Cys487–Cys502, Cys504–Cys515, Cys519–Cys529, Cys523–Cys535, Cys537–Cys546, Cys553–Cys566, Cys560–Cys575, Cys577–Cys594, Cys600–Cys613, Cys607–Cys622, and Cys624–Cys630. Residues Asn453, Leu454, and Leu457 each coordinate Ca(2+). Residues 476–516 enclose the EGF-like 2; calcium-binding domain; that stretch reads EHDECGSGQHNCDENAICTNTVQGHSCTCKPGYVGNGTICR. Asn511 carries an N-linked (GlcNAc...) asparagine glycan. The EGF-like 3 domain maps to 517–547; sequence AFCEEGCRYGGTCVAPNKCVCPSGFTGSHCE. One can recognise an EGF-like 4; calcium-binding domain in the interval 549 to 587; the sequence is DIDECSEGIIECHNHSRCVNLPGWYHCECRSGFHDDGTY. Residue Asn562 is glycosylated (N-linked (GlcNAc...) asparagine). The 36-residue stretch at 596-631 folds into the EGF-like 5; calcium-binding domain; that stretch reads DIDECALRTHTCWNDSACINLAGGFDCLCPSGPSCS. N-linked (GlcNAc...) asparagine glycosylation is present at Asn609. A VWFC 2 domain is found at 692–750; it reads SQCLDQNGHKLYRSGDNWTHSCQQCRCLEGEVDCWPLTCPNLSCEYTAILEGECCPRCV. N-linked (GlcNAc...) asparagine glycosylation is found at Asn708, Asn732, and Asn758.

In terms of assembly, homotrimer. Binds to PKC beta-1. Interacts with ATRAID; the interaction promotes osteoblast cell differentiation and mineralization. Interacts with ROBO3.

The protein localises to the cytoplasm. Its subcellular location is the nucleus envelope. The protein resides in the secreted. Plays a role in the control of cell growth and differentiation. Promotes osteoblast cell differentiation and terminal mineralization. The protein is Protein kinase C-binding protein NELL1 (NELL1) of Homo sapiens (Human).